The primary structure comprises 263 residues: Non-homologous end joining protein Ku 3 (263 aa).

One can recognise a Ku domain in the interval 6–169 (FGLVSVPVQL…WADEVRDPHR (164 aa)).

Belongs to the prokaryotic Ku family. Homodimer. Interacts with LigD.

Its function is as follows. With LigD forms a non-homologous end joining (NHEJ) DNA repair enzyme, which repairs dsDNA breaks with reduced fidelity. Binds linear dsDNA with 5'- and 3'- overhangs but not closed circular dsDNA nor ssDNA. Recruits and stimulates the ligase activity of LigD. The protein is Non-homologous end joining protein Ku 3 of Saccharopolyspora erythraea (strain ATCC 11635 / DSM 40517 / JCM 4748 / NBRC 13426 / NCIMB 8594 / NRRL 2338).